Consider the following 487-residue polypeptide: Calcium-binding tyrosine phosphorylation-regulated protein (487 aa).

The RIIa domain occupies 12–49 (YGLKTLLEGISRAVLKTNPSDINQFAAAYFQELTMYRG). 2 stretches are compositionally biased toward basic and acidic residues: residues 78 to 91 (KKLECLKEPEKTSV) and 101 to 117 (KSTDTDEDNVTRTEYSD). Disordered regions lie at residues 78–163 (KKLE…AVSP), 243–271 (VDLGSQPKENEAEQSTASSVPLQDEQEPP), and 420–487 (IVSD…ATAE). Low complexity predominate over residues 140-152 (SSSKPATPKATTP). 2 stretches are compositionally biased toward polar residues: residues 420 to 436 (IVSDNTGQEESGENSVP) and 455 to 464 (SGTSVKSSSG). A compositionally biased stretch (acidic residues) spans 478 to 487 (IEPEGEATAE).

Interacts with FSCB. Post-translationally, phosphorylated on tyrosine residues during in vitro capacitation. Dephosphorylation affects its ability to bind calcium.

The protein localises to the cytoplasm. Its subcellular location is the cytoskeleton. It is found in the cell projection. The protein resides in the cilium. It localises to the flagellum. In terms of biological role, may function as a regulator of both motility- and head-associated functions such as capacitation and the acrosome reaction. May bind calcium in vitro. This chain is Calcium-binding tyrosine phosphorylation-regulated protein (CABYR), found in Macaca fascicularis (Crab-eating macaque).